The following is a 115-amino-acid chain: Large ribosomal subunit protein bL20 (115 aa).

Belongs to the bacterial ribosomal protein bL20 family.

Functionally, binds directly to 23S ribosomal RNA and is necessary for the in vitro assembly process of the 50S ribosomal subunit. It is not involved in the protein synthesizing functions of that subunit. The chain is Large ribosomal subunit protein bL20 from Borrelia duttonii (strain Ly).